The sequence spans 533 residues: Glycogen synthase (533 aa).

Lys-12 provides a ligand contact to ADP-alpha-D-glucose. Residues 497-533 form a disordered region; it reads AALARADAASGRRRRAPEQSERLRQERLARQVALASK. A compositionally biased stretch (basic and acidic residues) spans 512–525; it reads APEQSERLRQERLA.

This sequence belongs to the glycosyltransferase 1 family. Bacterial/plant glycogen synthase subfamily.

The enzyme catalyses [(1-&gt;4)-alpha-D-glucosyl](n) + ADP-alpha-D-glucose = [(1-&gt;4)-alpha-D-glucosyl](n+1) + ADP + H(+). It functions in the pathway glycan biosynthesis; glycogen biosynthesis. Synthesizes alpha-1,4-glucan chains using ADP-glucose. This is Glycogen synthase from Burkholderia thailandensis (strain ATCC 700388 / DSM 13276 / CCUG 48851 / CIP 106301 / E264).